The chain runs to 115 residues: UPF0738 protein SH1953 (115 aa).

The protein belongs to the UPF0738 family.

The sequence is that of UPF0738 protein SH1953 from Staphylococcus haemolyticus (strain JCSC1435).